The primary structure comprises 434 residues: Histidinol dehydrogenase (434 aa).

Positions 260 and 263 each coordinate Zn(2+). Active-site proton acceptor residues include Glu330 and His331. His423 lines the Zn(2+) pocket.

This sequence belongs to the histidinol dehydrogenase family. It depends on Zn(2+) as a cofactor.

The catalysed reaction is L-histidinol + 2 NAD(+) + H2O = L-histidine + 2 NADH + 3 H(+). It participates in amino-acid biosynthesis; L-histidine biosynthesis; L-histidine from 5-phospho-alpha-D-ribose 1-diphosphate: step 9/9. Catalyzes the sequential NAD-dependent oxidations of L-histidinol to L-histidinaldehyde and then to L-histidine. The polypeptide is Histidinol dehydrogenase (hisD) (Synechocystis sp. (strain ATCC 27184 / PCC 6803 / Kazusa)).